Consider the following 110-residue polypeptide: Protein RnfH (110 aa).

Residues Arg-86 to Asn-110 form a disordered region. Basic and acidic residues predominate over residues Lys-94 to Asn-110.

This sequence belongs to the UPF0125 (RnfH) family.

This Mannheimia succiniciproducens (strain KCTC 0769BP / MBEL55E) protein is Protein RnfH.